Consider the following 611-residue polypeptide: Chaperone protein DnaK (611 aa).

Thr-173 carries the phosphothreonine; by autocatalysis modification. Residues 579 to 592 (AAGQAEGAQGAQDA) are compositionally biased toward low complexity. The segment at 579-598 (AAGQAEGAQGAQDAGAKKDN) is disordered.

This sequence belongs to the heat shock protein 70 family.

Its function is as follows. Acts as a chaperone. This is Chaperone protein DnaK from Bacillus cereus (strain B4264).